We begin with the raw amino-acid sequence, 375 residues long: tRNA(Met) cytidine acetate ligase (375 aa).

ATP-binding positions include 7–20 (VVEY…HRYH), Gly-101, Asn-151, and Arg-176.

The protein belongs to the TmcAL family.

Its subcellular location is the cytoplasm. It carries out the reaction cytidine(34) in elongator tRNA(Met) + acetate + ATP = N(4)-acetylcytidine(34) in elongator tRNA(Met) + AMP + diphosphate. Functionally, catalyzes the formation of N(4)-acetylcytidine (ac(4)C) at the wobble position of elongator tRNA(Met), using acetate and ATP as substrates. First activates an acetate ion to form acetyladenylate (Ac-AMP) and then transfers the acetyl group to tRNA to form ac(4)C34. This chain is tRNA(Met) cytidine acetate ligase, found in Limosilactobacillus fermentum (strain NBRC 3956 / LMG 18251) (Lactobacillus fermentum).